The chain runs to 423 residues: Phaseolin (423 aa).

A signal peptide spans 1-21; it reads RRVPLLLLGILFLASLSASFA. A glycan (N-linked (GlcNAc...) asparagine) is linked at N28. 2 Cupin type-1 domains span residues 35–193 and 228–383; these read FYFS…EKIN and KSLD…EDVQ. N-linked (GlcNAc...) asparagine glycosylation is found at N243, N332, N390, and N396. The interval 397–423 is disordered; it reads GSYHKNAHPHEQEQQKQQKGRKGAFVY. Residues 414–423 show a composition bias toward basic residues; that stretch reads QKGRKGAFVY.

This sequence belongs to the 7S seed storage protein family. As to quaternary structure, homotrimer.

The protein localises to the vacuole. Its subcellular location is the aleurone grain. Major seed storage protein. The polypeptide is Phaseolin (PHS) (Phaseolus lunatus (Lima bean)).